Here is a 262-residue protein sequence, read N- to C-terminus: Adenosylcobinamide-GDP ribazoletransferase (262 aa).

A run of 6 helical transmembrane segments spans residues 43 to 63 (YFGLVGLLVGLLSAIVFWLTQ), 66 to 86 (LPAGVSVLLSMVTGVLLTGGF), 120 to 140 (GALALMLVLMLKWQLLVELAL), 146 to 166 (AGSAMIVAHTVSRVVAASLIF), 191 to 211 (LFILIASGVLVLLVLKGIAAL), and 242 to 262 (AAQQICEIVCYFVLLVVGSIL).

It belongs to the CobS family. It depends on Mg(2+) as a cofactor.

The protein resides in the cell inner membrane. The catalysed reaction is alpha-ribazole + adenosylcob(III)inamide-GDP = adenosylcob(III)alamin + GMP + H(+). It catalyses the reaction alpha-ribazole 5'-phosphate + adenosylcob(III)inamide-GDP = adenosylcob(III)alamin 5'-phosphate + GMP + H(+). It functions in the pathway cofactor biosynthesis; adenosylcobalamin biosynthesis; adenosylcobalamin from cob(II)yrinate a,c-diamide: step 7/7. Functionally, joins adenosylcobinamide-GDP and alpha-ribazole to generate adenosylcobalamin (Ado-cobalamin). Also synthesizes adenosylcobalamin 5'-phosphate from adenosylcobinamide-GDP and alpha-ribazole 5'-phosphate. In Shewanella sp. (strain ANA-3), this protein is Adenosylcobinamide-GDP ribazoletransferase.